We begin with the raw amino-acid sequence, 248 residues long: Acetoacetyl-CoA reductase (248 aa).

Residues 14–16, arginine 42, and 90–94 each bind NADP(+); these read GGI and NAGIT. Substrate-binding positions include aspartate 96 and 149–152; that span reads QFGQ. Catalysis depends on tyrosine 155, which acts as the Proton acceptor. Residue 185–188 participates in NADP(+) binding; it reads PGYT. Substrate contacts are provided by residues 186 to 187 and arginine 197; that span reads GY.

It belongs to the short-chain dehydrogenases/reductases (SDR) family.

Its subcellular location is the cytoplasm. The enzyme catalyses a (3R)-3-hydroxyacyl-CoA + NADP(+) = a 3-oxoacyl-CoA + NADPH + H(+). The protein operates within biopolymer metabolism; poly-(R)-3-hydroxybutanoate biosynthesis. This Acinetobacter sp. (strain RA3849) protein is Acetoacetyl-CoA reductase (phaB).